The sequence spans 100 residues: NADH-quinone oxidoreductase subunit K (100 aa).

3 helical membrane-spanning segments follow: residues 4–24 (VTWY…GVLL), 29–49 (LIVM…FLAF), and 61–81 (IAFF…AVVI).

It belongs to the complex I subunit 4L family. As to quaternary structure, NDH-1 is composed of 14 different subunits. Subunits NuoA, H, J, K, L, M, N constitute the membrane sector of the complex.

It is found in the cell inner membrane. The enzyme catalyses a quinone + NADH + 5 H(+)(in) = a quinol + NAD(+) + 4 H(+)(out). Functionally, NDH-1 shuttles electrons from NADH, via FMN and iron-sulfur (Fe-S) centers, to quinones in the respiratory chain. The immediate electron acceptor for the enzyme in this species is believed to be ubiquinone. Couples the redox reaction to proton translocation (for every two electrons transferred, four hydrogen ions are translocated across the cytoplasmic membrane), and thus conserves the redox energy in a proton gradient. The polypeptide is NADH-quinone oxidoreductase subunit K (Anaeromyxobacter sp. (strain Fw109-5)).